A 354-amino-acid chain; its full sequence is Protein RecA (354 aa).

67-74 (GPESSGKT) is a binding site for ATP.

This sequence belongs to the RecA family.

It is found in the cytoplasm. Its function is as follows. Can catalyze the hydrolysis of ATP in the presence of single-stranded DNA, the ATP-dependent uptake of single-stranded DNA by duplex DNA, and the ATP-dependent hybridization of homologous single-stranded DNAs. It interacts with LexA causing its activation and leading to its autocatalytic cleavage. This chain is Protein RecA, found in Chlamydia muridarum (strain MoPn / Nigg).